The primary structure comprises 65 residues: Large ribosomal subunit protein bL31 (65 aa).

4 residues coordinate Zn(2+): Cys16, Cys18, Cys36, and Cys39.

It belongs to the bacterial ribosomal protein bL31 family. Type A subfamily. Part of the 50S ribosomal subunit. The cofactor is Zn(2+).

Its function is as follows. Binds the 23S rRNA. The protein is Large ribosomal subunit protein bL31 of Campylobacter jejuni subsp. doylei (strain ATCC BAA-1458 / RM4099 / 269.97).